The following is a 1910-amino-acid chain: Endoribonuclease dcr-1 (1910 aa).

Positions 20 to 201 (LLDKATKKNT…KLMEQLKKLE (182 aa)) constitute a Helicase ATP-binding domain. Position 33–40 (33–40 (LGTGSGKT)) interacts with ATP. A DEAH box motif is present at residues 145-148 (DECH). One can recognise a Helicase C-terminal domain in the interval 371–542 (EFQKERMKLE…TVNNPIEDDS (172 aa)). The 97-residue stretch at 571 to 667 (AIALINRYCS…LPKGRESIAK (97 aa)) folds into the Dicer dsRNA-binding fold domain. Residues 845–1003 (YVSEVVANME…LVPELMDIHP (159 aa)) form the PAZ domain. Disordered stretches follow at residues 951–988 (RIQN…VPHS), 1227–1248 (TASS…KQLT), and 1272–1309 (LEMS…PTNF). Composition is skewed to polar residues over residues 970-988 (IPQA…VPHS) and 1227-1245 (TASS…SPPK). Positions 1245 to 1280 (KQLTKEEEQFKKLQNDLLKQAKERLEALEMSEDMEK) form a coiled coil. Residues 1272–1286 (LEMSEDMEKPRRLED) show a composition bias toward basic and acidic residues. Residues 1288-1304 (VNLEDYGDDQENQEDEN) are compositionally biased toward acidic residues. RNase III domains lie at 1381–1589 (VSHI…LTLG) and 1643–1805 (FTQL…LDSG). Mg(2+) is bound by residues Glu-1682, Asp-1791, and Glu-1794. A DRBM domain is found at 1833-1896 (SPIRELMEFE…AKRALKYLHQ (64 aa)).

The protein belongs to the helicase family. Dicer subfamily. As to quaternary structure, component of the ERI/DICER complex at least composed of dcr-1, rrf-3 and eri-1. Interacts with pir-1. Mg(2+) serves as cofactor. The cofactor is Mn(2+).

Component of the ERI/DICER complex which is involved in processing amplified double-stranded RNA (dsRNA) intermediates during small-RNA-mediated gene-silencing or RNA interference (RNAi). Involved in cleaving dsRNA in the RNAi pathway. It produces 21 to 23 bp dsRNAs (siRNAs) which target the selective destruction of homologous RNAs. Seems to process the precursor of the small temporal RNA let-7 which is involved in developmental timing. Required for avoidance behavior induced by small RNAs derived from pathogenic bacteria such as P.aeruginosa. Involved in innate immunity through its role in small RNA processing. Functionally, tDCR-1 acts as a deoxyribonuclease (DNase) initiating DNA fragmentation during apoptosis, upstream of nucleases cps-6, crn-2 and nuc-1. This is Endoribonuclease dcr-1 from Caenorhabditis elegans.